A 432-amino-acid chain; its full sequence is Adenylosuccinate synthetase (432 aa).

GTP-binding positions include 13 to 19 (GDEGKGK) and 41 to 43 (GHT). Aspartate 14 acts as the Proton acceptor in catalysis. Mg(2+) contacts are provided by aspartate 14 and glycine 41. IMP-binding positions include 14-17 (DEGK), 39-42 (NAGH), threonine 130, arginine 144, glutamine 225, threonine 240, and arginine 304. The active-site Proton donor is histidine 42. 300 to 306 (AVTGRPR) is a substrate binding site. GTP is bound by residues arginine 306, 332 to 334 (KLD), and 415 to 417 (STG).

It belongs to the adenylosuccinate synthetase family. In terms of assembly, homodimer. It depends on Mg(2+) as a cofactor.

Its subcellular location is the cytoplasm. It carries out the reaction IMP + L-aspartate + GTP = N(6)-(1,2-dicarboxyethyl)-AMP + GDP + phosphate + 2 H(+). The protein operates within purine metabolism; AMP biosynthesis via de novo pathway; AMP from IMP: step 1/2. Its function is as follows. Plays an important role in the de novo pathway of purine nucleotide biosynthesis. Catalyzes the first committed step in the biosynthesis of AMP from IMP. In Mannheimia succiniciproducens (strain KCTC 0769BP / MBEL55E), this protein is Adenylosuccinate synthetase.